The chain runs to 206 residues: Small ribosomal subunit protein uS4 (206 aa).

The S4 RNA-binding domain occupies 96 to 157; the sequence is QRLDNVVYRM…KAKKQARIGA (62 aa).

Belongs to the universal ribosomal protein uS4 family. As to quaternary structure, part of the 30S ribosomal subunit. Contacts protein S5. The interaction surface between S4 and S5 is involved in control of translational fidelity.

Functionally, one of the primary rRNA binding proteins, it binds directly to 16S rRNA where it nucleates assembly of the body of the 30S subunit. With S5 and S12 plays an important role in translational accuracy. This chain is Small ribosomal subunit protein uS4, found in Idiomarina loihiensis (strain ATCC BAA-735 / DSM 15497 / L2-TR).